The primary structure comprises 86 residues: ATP synthase subunit c (86 aa).

The next 2 helical transmembrane spans lie at 8–28 (VLGC…GPGI) and 64–84 (TTGL…PLLG).

The protein belongs to the ATPase C chain family. As to quaternary structure, F-type ATPases have 2 components, F(1) - the catalytic core - and F(0) - the membrane proton channel. F(1) has five subunits: alpha(3), beta(3), gamma(1), delta(1), epsilon(1). F(0) has three main subunits: a(1), b(2) and c(10-14). The alpha and beta chains form an alternating ring which encloses part of the gamma chain. F(1) is attached to F(0) by a central stalk formed by the gamma and epsilon chains, while a peripheral stalk is formed by the delta and b chains.

The protein resides in the cell membrane. In terms of biological role, f(1)F(0) ATP synthase produces ATP from ADP in the presence of a proton or sodium gradient. F-type ATPases consist of two structural domains, F(1) containing the extramembraneous catalytic core and F(0) containing the membrane proton channel, linked together by a central stalk and a peripheral stalk. During catalysis, ATP synthesis in the catalytic domain of F(1) is coupled via a rotary mechanism of the central stalk subunits to proton translocation. Key component of the F(0) channel; it plays a direct role in translocation across the membrane. A homomeric c-ring of between 10-14 subunits forms the central stalk rotor element with the F(1) delta and epsilon subunits. This Lachnoclostridium phytofermentans (strain ATCC 700394 / DSM 18823 / ISDg) (Clostridium phytofermentans) protein is ATP synthase subunit c.